A 169-amino-acid polypeptide reads, in one-letter code: MTDRTQPHTVQVHTTAGRFGDTAAGTNRYPDRGPSTSKVIAVITGLPIGGTLLLFAGLALAGTLLGLAVTTPLFILFSPVIVPAIIVVGLSVAGFLTSGACGLTGLSSFSWVMNYIRQTHGSVPEQLEMAKHRMADVAGYVGQKTKDVGQKTKEVGQEIQTKAQDSKRT.

Helical transmembrane passes span 39–59 (VIAV…AGLA) and 73–93 (LFIL…LSVA). Over residues 146–156 (KDVGQKTKEVG) the composition is skewed to basic and acidic residues. Residues 146-169 (KDVGQKTKEVGQEIQTKAQDSKRT) are disordered.

This sequence belongs to the oleosin family. As to expression, expressed in seeds (at protein level).

It is found in the lipid droplet. The protein resides in the membrane. Functionally, may have a structural role to stabilize the lipid body during desiccation of the seed by preventing coalescence of the oil. Probably interacts with both lipid and phospholipid moieties of lipid bodies. May also provide recognition signals for specific lipase anchorage in lipolysis during seedling growth. This chain is Oleosin Ara h 10.0101, found in Arachis hypogaea (Peanut).